Reading from the N-terminus, the 286-residue chain is Main hemagglutinin component type C (286 aa).

A 1-alpha repeat occupies 2–55 (SQTNANDLRNNEVFFISPSNNTNKVLDKISQSEVKLWNKLSGANQKWRLIYDTN). Ricin B-type lectin domains follow at residues 12-140 (NEVF…FKFS) and 180-284 (DSSR…WIIN). One copy of the 1-beta repeat lies at 56–100 (KQAYKIKVMDNTSLILTWNAPLSSVSVKTDTNGDNQYWYLLQNYI). Residues 101–148 (SRNVIIRNYMNPNLVLQYNIDDTLMVSTQTSSSNQFFKFSNCIYEALN) form a 1-gamma repeat. One copy of the 2-alpha repeat lies at 149 to 193 (NRNCKLQTQLNSDRFLSKNLNSQIIVLWQWFDSSRQKWIIEYNET). Residues 167 to 183 (NLNSQIIVLWQWFDSSR) are sugar-binding site 1. Residues 194 to 239 (KSAYTLKCQENNRYLTWIQNSNNYVETYQSTDSLIQYWNINYLDND) form a 2-beta repeat. The 2-gamma repeat unit spans residues 240–286 (ASKYILYNLQDTNRVLDVYNSQIANGTHVIVDSYHGNTNQQWIINLI). The segment at 256–279 (DVYNSQIANGTHVIVDSYHGNTNQ) is sugar-binding site 2.

Botulinum toxins are produced as progenitor toxins of large molecular sizes of 12S (M toxin) and 16S (L toxin). M toxin consists of a non-toxic, non-hemagglutinin component (NTNHA) and the neurotoxin. L toxin consists of the M toxin and the 3 subcomponents of hemagglutinin (HA). HA is composed of subcomponents of 70, 33, and 17 kDa. The 70 kDa subcomponent undergoes proteolytic processing and is split into HA-55 (also called HA-53 and HA3b) and HA-22-23 (also called HA3a). The stoichiometry of the whole complex has been modeled as one BoNT/C, one NTNHA, three HA-70, six HA-33 and three HA-17.

The protein localises to the secreted. In terms of biological role, agglutinates human erythrocytes. The hemagglutinin (HA) component of the progenitor toxin protects the structural integrity of botulinum neurotoxin; may increase internalization of the neurotoxin into the bloodstream of the host. The hemagglutinin (HA) component is involved in binding to the upper small intestine through interactions with glycolipids and glycoproteins containing sialic acid moieties. Binds galactose or oligosaccharides with galactose at their non-reducing end. Binds eukaryotic host mucins; binding is inhibited by N-acetyl-beta-neuraminic acid, N-acetyl-D-galactosamine, galactose, and methyl N-acetyl-beta-neuraminic acid. Binds N-acetyl-beta-neuraminic acid, N-acetyl-D-galactosamine and galactose (but not glucose) via 2 sites. The protein is Main hemagglutinin component type C of Clostridium botulinum C (Clostridium botulinum C bacteriophage).